Here is a 224-residue protein sequence, read N- to C-terminus: Deoxyribose-phosphate aldolase (224 aa).

Aspartate 94 serves as the catalytic Proton donor/acceptor. Catalysis depends on lysine 158, which acts as the Schiff-base intermediate with acetaldehyde. Residue lysine 187 is the Proton donor/acceptor of the active site.

It belongs to the DeoC/FbaB aldolase family. DeoC type 1 subfamily. As to quaternary structure, homodimer.

The protein localises to the cytoplasm. It carries out the reaction 2-deoxy-D-ribose 5-phosphate = D-glyceraldehyde 3-phosphate + acetaldehyde. Its activity is regulated as follows. Activated by citrate. Inhibited by NaBH(4). Activity is independent of divalent metal cations. Its function is as follows. Catalyzes a reversible aldol reaction between acetaldehyde and D-glyceraldehyde 3-phosphate to generate 2-deoxy-D-ribose 5-phosphate. Could be involved in pentose biosynthesis. The protein is Deoxyribose-phosphate aldolase of Thermococcus kodakarensis (strain ATCC BAA-918 / JCM 12380 / KOD1) (Pyrococcus kodakaraensis (strain KOD1)).